Here is a 109-residue protein sequence, read N- to C-terminus: Thioredoxin 1 (109 aa).

In terms of domain architecture, Thioredoxin spans 2-109; that stretch reads SDKIIHLTDD…LKEFLDANLA (108 aa). Residues cysteine 33 and cysteine 36 each act as nucleophile in the active site. Cysteine 33 and cysteine 36 form a disulfide bridge. Lysine 70 carries the post-translational modification N6-acetyllysine.

Belongs to the thioredoxin family. Monomer.

Participates in various redox reactions through the reversible oxidation of its active center dithiol to a disulfide and catalyzes dithiol-disulfide exchange reactions. This chain is Thioredoxin 1 (trxA), found in Escherichia coli O157:H7.